The following is a 74-amino-acid chain: Exodeoxyribonuclease 7 small subunit (74 aa).

This sequence belongs to the XseB family. In terms of assembly, heterooligomer composed of large and small subunits.

The protein resides in the cytoplasm. It carries out the reaction Exonucleolytic cleavage in either 5'- to 3'- or 3'- to 5'-direction to yield nucleoside 5'-phosphates.. Functionally, bidirectionally degrades single-stranded DNA into large acid-insoluble oligonucleotides, which are then degraded further into small acid-soluble oligonucleotides. The chain is Exodeoxyribonuclease 7 small subunit from Actinobacillus pleuropneumoniae serotype 5b (strain L20).